The following is a 1305-amino-acid chain: MNSVRRLNSILTLVLSGLWHLGLTATNYNCDEPLASFLSPLAFFSSSDLNGRFSPPQLNWRIGSGGWSPAVSNAHQWLQIDLGNRVEITAVATQGRYGSTDWVTSYRLMFSDTGHNWQQYKQKDSIWTFVGNTNADGVVYHKLLHSMRARFVRFVPLEWNSNGKIGMRVEVYGCSYKSDIVGFDGQSTLLYRFNQKTMSTLKDVISLKFKSMQGDGVLFHGEGQRGDHITLELQKGRLALYLNIDGSKARLSIIAPLAILGSLLDDQHWHSVLLERVGKQANFTVDRNTQHFQIKGETDALDIDYELSFGGIPVPSKPGTFLKKNFHGCIENVYYNGVNIIDLAKRRKHQIYSGNVTFSCSEPEIVPITFVNSRSSYLLLPGIPQIHGLSVSFHFRTWNEDGLLLSTELSEGSGTLLLILDGGSLRLLIKKVARHGTEIITGSSLNDGLWHSVSINARRNRVTLTLDNDAASPALDTSQLQIYSGNSYYFGGCPDNLTDSQCLNPIKAFQGCMRLIFIDNQPKDLISVQQGSMGNFSDLHIDLCSIKDRCLPNYCEHGGHCAQNWTTFYCNCSDTGYTGATCHDSVYEQSCEVYRHKGHTAGFFYVDSDGSGPLGPLQVYCNITEDKIWMTVQHNNTELTWVQISNAEKAYAMTFNYGGSMEQLEALIDGSEHCEQEVTYYCRRSHLLKTPDGAPFTWWIGRSNKRHNYWEGSVPRVQQCRCVHKENCLDIRSFCNCDADIGEWAKETGFLSFKDHLPVTQIITTDTNRSKSEAAWKIGPLRCYGDRHFWNAVSFTTEASYLYFPTFHAEFSADISFFFKTTALSGVFLENLGIKDFLRLEMSSPSEITFTIDVGNGPVELLIQSPYPLNDNQWHYIRAERNLKETSLQVDNLPQSMREASEEAYFRLHLTSQLFVGGTSSRQKGFLGCMRSLHLNGQNTDLIERAKLMSGVTPGCLGHCSSYGSNCLNGGKCVEKQSGYSCDCTNSPNEGPFCQKEISALFNSGTSVTYLFQEPYLVIKNTSLLSSPIYADTAPSKETIMLNFLTTQAPTILLYLNFSSQNFLAILLSRNGSLQICFRLSKIESHVYTMNTENLANGRVHQVKINKDGPELSIQMDQQLFTYNFSPKVEFWTLKSLVLGKVTETLGLDPEVAKVNILGFVGCLSSVQYNHIAPLKAALRHSGIAPVTVQGTLTESGCDSTLDSDVNAVTTVHSSLDPIGKRDEREPLTDTVQSDSAVIGGIIALVTFVTFCVIGIMIHFLYLHKQSHCTNQTKEKEYSENLSNSFRNAIDLQNTASECKREYFI.

The first 24 residues, 1–24 (MNSVRRLNSILTLVLSGLWHLGLT), serve as a signal peptide directing secretion. Topologically, residues 25-1237 (ATNYNCDEPL…LTDTVQSDSA (1213 aa)) are extracellular. Positions 30–174 (CDEPLASFLS…IGMRVEVYGC (145 aa)) constitute an F5/8 type C domain. Residues cysteine 30 and cysteine 174 are joined by a disulfide bond. 2 Laminin G-like domains span residues 180 to 360 (IVGF…TFSC) and 367 to 544 (PITF…IDLC). The N-linked (GlcNAc...) asparagine glycan is linked to asparagine 282. A disulfide bond links cysteine 329 and cysteine 360. A glycan (N-linked (GlcNAc...) asparagine) is linked at asparagine 496. 3 cysteine pairs are disulfide-bonded: cysteine 512-cysteine 544, cysteine 550-cysteine 561, and cysteine 555-cysteine 570. An EGF-like 1 domain is found at 546–583 (IKDRCLPNYCEHGGHCAQNWTTFYCNCSDTGYTGATCH). Residue asparagine 571 is glycosylated (N-linked (GlcNAc...) asparagine). A disulfide bridge connects residues cysteine 572 and cysteine 582. The 207-residue stretch at 584–790 (DSVYEQSCEV…LRCYGDRHFW (207 aa)) folds into the Fibrinogen C-terminal domain. Asparagine 622 carries N-linked (GlcNAc...) asparagine glycosylation. A Laminin G-like 3 domain is found at 791 to 956 (NAVSFTTEAS…KLMSGVTPGC (166 aa)). 4 disulfide bridges follow: cysteine 929–cysteine 956, cysteine 960–cysteine 973, cysteine 967–cysteine 982, and cysteine 984–cysteine 994. Positions 957-995 (LGHCSSYGSNCLNGGKCVEKQSGYSCDCTNSPNEGPFCQ) constitute an EGF-like 2 domain. The Laminin G-like 4 domain maps to 1014–1198 (EPYLVIKNTS…VQGTLTESGC (185 aa)). Asparagine 1057 is a glycosylation site (N-linked (GlcNAc...) asparagine). An intrachain disulfide couples cysteine 1163 to cysteine 1198. The chain crosses the membrane as a helical span at residues 1238–1258 (VIGGIIALVTFVTFCVIGIMI). Topologically, residues 1259 to 1305 (HFLYLHKQSHCTNQTKEKEYSENLSNSFRNAIDLQNTASECKREYFI) are cytoplasmic.

The protein belongs to the neurexin family.

It localises to the membrane. Its function is as follows. May play a role in the correct development and proper functioning of the peripheral and central nervous system and be involved in cell adhesion and intercellular communication. In Rattus norvegicus (Rat), this protein is Contactin-associated protein like 5-4 (Cntnap5d).